Here is a 297-residue protein sequence, read N- to C-terminus: 4-diphosphocytidyl-2-C-methyl-D-erythritol kinase (297 aa).

Lysine 14 is an active-site residue. An ATP-binding site is contributed by proline 99–alanine 109. Aspartate 141 is a catalytic residue.

The protein belongs to the GHMP kinase family. IspE subfamily.

It carries out the reaction 4-CDP-2-C-methyl-D-erythritol + ATP = 4-CDP-2-C-methyl-D-erythritol 2-phosphate + ADP + H(+). The protein operates within isoprenoid biosynthesis; isopentenyl diphosphate biosynthesis via DXP pathway; isopentenyl diphosphate from 1-deoxy-D-xylulose 5-phosphate: step 3/6. Catalyzes the phosphorylation of the position 2 hydroxy group of 4-diphosphocytidyl-2C-methyl-D-erythritol. In Bradyrhizobium diazoefficiens (strain JCM 10833 / BCRC 13528 / IAM 13628 / NBRC 14792 / USDA 110), this protein is 4-diphosphocytidyl-2-C-methyl-D-erythritol kinase.